Reading from the N-terminus, the 224-residue chain is MGQKINPNGFRLGVIRDWESKWYADKGYKETLKEDLQIRKFISEKLKDASVSTVEIERAANRINISIHTAKPGMVIGKGGSEVEALRKQLNALTGKQVHINIVEIKKPDLDAELVADSIARQLEARIAFRRAMRQATQRAMLAGAKGIKVQTSGRLNGADMARREWHTEGRVPLQTLRADIDYAWVNAFTTYGEIGVQVWINRGEILPTRKNKPASKPAKGGNR.

The KH type-2 domain maps to 38–106; the sequence is IRKFISEKLK…QVHINIVEIK (69 aa).

It belongs to the universal ribosomal protein uS3 family. In terms of assembly, part of the 30S ribosomal subunit. Forms a tight complex with proteins S10 and S14.

Functionally, binds the lower part of the 30S subunit head. Binds mRNA in the 70S ribosome, positioning it for translation. This chain is Small ribosomal subunit protein uS3, found in Lactobacillus acidophilus (strain ATCC 700396 / NCK56 / N2 / NCFM).